The chain runs to 185 residues: Ribosome-recycling factor (185 aa).

The protein belongs to the RRF family.

It localises to the cytoplasm. In terms of biological role, responsible for the release of ribosomes from messenger RNA at the termination of protein biosynthesis. May increase the efficiency of translation by recycling ribosomes from one round of translation to another. This Chromobacterium violaceum (strain ATCC 12472 / DSM 30191 / JCM 1249 / CCUG 213 / NBRC 12614 / NCIMB 9131 / NCTC 9757 / MK) protein is Ribosome-recycling factor.